Consider the following 335-residue polypeptide: 4-hydroxy-3-methylbut-2-enyl diphosphate reductase (335 aa).

Residue Cys-21 participates in [4Fe-4S] cluster binding. Positions 50 and 86 each coordinate (2E)-4-hydroxy-3-methylbut-2-enyl diphosphate. The dimethylallyl diphosphate site is built by His-50 and His-86. Isopentenyl diphosphate-binding residues include His-50 and His-86. Position 108 (Cys-108) interacts with [4Fe-4S] cluster. His-136 serves as a coordination point for (2E)-4-hydroxy-3-methylbut-2-enyl diphosphate. His-136 provides a ligand contact to dimethylallyl diphosphate. His-136 contributes to the isopentenyl diphosphate binding site. Glu-138 serves as the catalytic Proton donor. Position 177 (Thr-177) interacts with (2E)-4-hydroxy-3-methylbut-2-enyl diphosphate. Residue Cys-207 coordinates [4Fe-4S] cluster. (2E)-4-hydroxy-3-methylbut-2-enyl diphosphate-binding residues include Ser-235, Ser-236, Asn-237, and Ser-280. Dimethylallyl diphosphate-binding residues include Ser-235, Ser-236, Asn-237, and Ser-280. Ser-235, Ser-236, Asn-237, and Ser-280 together coordinate isopentenyl diphosphate.

Belongs to the IspH family. The cofactor is [4Fe-4S] cluster.

It carries out the reaction isopentenyl diphosphate + 2 oxidized [2Fe-2S]-[ferredoxin] + H2O = (2E)-4-hydroxy-3-methylbut-2-enyl diphosphate + 2 reduced [2Fe-2S]-[ferredoxin] + 2 H(+). It catalyses the reaction dimethylallyl diphosphate + 2 oxidized [2Fe-2S]-[ferredoxin] + H2O = (2E)-4-hydroxy-3-methylbut-2-enyl diphosphate + 2 reduced [2Fe-2S]-[ferredoxin] + 2 H(+). Its pathway is isoprenoid biosynthesis; dimethylallyl diphosphate biosynthesis; dimethylallyl diphosphate from (2E)-4-hydroxy-3-methylbutenyl diphosphate: step 1/1. It functions in the pathway isoprenoid biosynthesis; isopentenyl diphosphate biosynthesis via DXP pathway; isopentenyl diphosphate from 1-deoxy-D-xylulose 5-phosphate: step 6/6. Functionally, catalyzes the conversion of 1-hydroxy-2-methyl-2-(E)-butenyl 4-diphosphate (HMBPP) into a mixture of isopentenyl diphosphate (IPP) and dimethylallyl diphosphate (DMAPP). Acts in the terminal step of the DOXP/MEP pathway for isoprenoid precursor biosynthesis. This is 4-hydroxy-3-methylbut-2-enyl diphosphate reductase from Rhizobium rhizogenes (strain K84 / ATCC BAA-868) (Agrobacterium radiobacter).